The following is a 535-amino-acid chain: Phosphoenolpyruvate carboxykinase (ATP) (535 aa).

Positions 59, 201, and 207 each coordinate substrate. Residues Lys207, His226, and 243-251 (GLSGTGKTT) each bind ATP. Lys207 and His226 together coordinate Mn(2+). Residue Asp264 participates in Mn(2+) binding. ATP contacts are provided by residues Glu292, Arg328, 444 to 445 (RI), and Thr450. Substrate is bound at residue Arg328.

This sequence belongs to the phosphoenolpyruvate carboxykinase (ATP) family. Mn(2+) is required as a cofactor.

It localises to the cytoplasm. It catalyses the reaction oxaloacetate + ATP = phosphoenolpyruvate + ADP + CO2. It participates in carbohydrate biosynthesis; gluconeogenesis. Its function is as follows. Involved in the gluconeogenesis. Catalyzes the conversion of oxaloacetate (OAA) to phosphoenolpyruvate (PEP) through direct phosphoryl transfer between the nucleoside triphosphate and OAA. In Porphyromonas gingivalis (strain ATCC BAA-308 / W83), this protein is Phosphoenolpyruvate carboxykinase (ATP).